We begin with the raw amino-acid sequence, 166 residues long: RNA pyrophosphohydrolase (166 aa).

The Nudix hydrolase domain occupies 8-158 (PYRSCVGMML…KRPVYERVVK (151 aa)). Residues 47 to 68 (GGIDPGEDYWEAAQRELLEETN) carry the Nudix box motif.

The protein belongs to the Nudix hydrolase family. RppH subfamily. Requires a divalent metal cation as cofactor.

In terms of biological role, accelerates the degradation of transcripts by removing pyrophosphate from the 5'-end of triphosphorylated RNA, leading to a more labile monophosphorylated state that can stimulate subsequent ribonuclease cleavage. In Afipia carboxidovorans (strain ATCC 49405 / DSM 1227 / KCTC 32145 / OM5) (Oligotropha carboxidovorans), this protein is RNA pyrophosphohydrolase.